The chain runs to 161 residues: RNA pyrophosphohydrolase (161 aa).

In terms of domain architecture, Nudix hydrolase spans 12–154 (PYRPGVGMMI…KRKLYQAVVK (143 aa)). The Nudix box signature appears at 46–67 (GGIVPGETPSIAAMREMLEEIG).

The protein belongs to the Nudix hydrolase family. RppH subfamily. A divalent metal cation is required as a cofactor.

In terms of biological role, accelerates the degradation of transcripts by removing pyrophosphate from the 5'-end of triphosphorylated RNA, leading to a more labile monophosphorylated state that can stimulate subsequent ribonuclease cleavage. The chain is RNA pyrophosphohydrolase from Rickettsia bellii (strain OSU 85-389).